The sequence spans 143 residues: Transcription antitermination protein NusB (143 aa).

The protein belongs to the NusB family.

Functionally, involved in transcription antitermination. Required for transcription of ribosomal RNA (rRNA) genes. Binds specifically to the boxA antiterminator sequence of the ribosomal RNA (rrn) operons. This chain is Transcription antitermination protein NusB, found in Methylacidiphilum infernorum (isolate V4) (Methylokorus infernorum (strain V4)).